A 439-amino-acid chain; its full sequence is Trigger factor (439 aa).

The PPIase FKBP-type domain maps to 163 to 248 (GDIAVIDFEG…LNQIKERVLP (86 aa)).

This sequence belongs to the FKBP-type PPIase family. Tig subfamily.

The protein localises to the cytoplasm. It catalyses the reaction [protein]-peptidylproline (omega=180) = [protein]-peptidylproline (omega=0). Involved in protein export. Acts as a chaperone by maintaining the newly synthesized protein in an open conformation. Functions as a peptidyl-prolyl cis-trans isomerase. The sequence is that of Trigger factor from Syntrophotalea carbinolica (strain DSM 2380 / NBRC 103641 / GraBd1) (Pelobacter carbinolicus).